Here is a 450-residue protein sequence, read N- to C-terminus: tRNA-2-methylthio-N(6)-dimethylallyladenosine synthase (450 aa).

Residues 7 to 127 (KRLYIKTYGC…LPELIARAHR (121 aa)) form the MTTase N-terminal domain. [4Fe-4S] cluster is bound by residues cysteine 16, cysteine 52, cysteine 90, cysteine 165, cysteine 169, and cysteine 172. The Radical SAM core domain maps to 151 to 378 (QVSGVSAFLT…NQLLDEQQKA (228 aa)). Positions 381–443 (ILQVGKTMPV…KMSLGGVLET (63 aa)) constitute a TRAM domain.

The protein belongs to the methylthiotransferase family. MiaB subfamily. In terms of assembly, monomer. [4Fe-4S] cluster serves as cofactor.

The protein resides in the cytoplasm. The catalysed reaction is N(6)-dimethylallyladenosine(37) in tRNA + (sulfur carrier)-SH + AH2 + 2 S-adenosyl-L-methionine = 2-methylsulfanyl-N(6)-dimethylallyladenosine(37) in tRNA + (sulfur carrier)-H + 5'-deoxyadenosine + L-methionine + A + S-adenosyl-L-homocysteine + 2 H(+). Catalyzes the methylthiolation of N6-(dimethylallyl)adenosine (i(6)A), leading to the formation of 2-methylthio-N6-(dimethylallyl)adenosine (ms(2)i(6)A) at position 37 in tRNAs that read codons beginning with uridine. The sequence is that of tRNA-2-methylthio-N(6)-dimethylallyladenosine synthase from Caulobacter sp. (strain K31).